Consider the following 57-residue polypeptide: Large ribosomal subunit protein bL32c (57 aa).

Belongs to the bacterial ribosomal protein bL32 family.

It is found in the plastid. The protein resides in the chloroplast. This Acorus calamus (Sweet flag) protein is Large ribosomal subunit protein bL32c.